The following is a 184-amino-acid chain: RNA 2',3'-cyclic phosphodiesterase (184 aa).

The active-site Proton donor is the H42. 2 consecutive short sequence motifs (HXTX) follow at residues H42 to L45 and H127 to V130. H127 functions as the Proton acceptor in the catalytic mechanism.

This sequence belongs to the 2H phosphoesterase superfamily. ThpR family.

It carries out the reaction a 3'-end 2',3'-cyclophospho-ribonucleotide-RNA + H2O = a 3'-end 2'-phospho-ribonucleotide-RNA + H(+). In terms of biological role, hydrolyzes RNA 2',3'-cyclic phosphodiester to an RNA 2'-phosphomonoester. This is RNA 2',3'-cyclic phosphodiesterase from Methanothermobacter thermautotrophicus (strain ATCC 29096 / DSM 1053 / JCM 10044 / NBRC 100330 / Delta H) (Methanobacterium thermoautotrophicum).